A 225-amino-acid polypeptide reads, in one-letter code: Germin-like protein 3-8 (225 aa).

The first 25 residues, 1-25, serve as a signal peptide directing secretion; sequence MSRTSSAPLLVLSAALAVLASTCIA. An intrachain disulfide couples Cys34 to Cys57. Residues 71-219 form the Cupin type-1 domain; it reads AGLAVASDTD…SFQVDAKIIK (149 aa). The N-linked (GlcNAc...) asparagine glycan is linked to Asn86. Mn(2+)-binding residues include His119, His121, Glu126, and His165.

The protein belongs to the germin family. In terms of assembly, oligomer (believed to be a pentamer but probably hexamer).

The protein localises to the secreted. It is found in the extracellular space. Its subcellular location is the apoplast. In terms of biological role, may play a role in plant defense. Probably has no oxalate oxidase activity even if the active site is conserved. The sequence is that of Germin-like protein 3-8 from Oryza sativa subsp. japonica (Rice).